Consider the following 301-residue polypeptide: Ornithine carbamoyltransferase (301 aa).

Residues 46–49 (STRT), Gln-73, Arg-97, and 124–127 (HPCQ) each bind carbamoyl phosphate. L-ornithine contacts are provided by residues Asn-154, Asp-218, and 222–223 (SM). Residues 258-259 (CL) and Arg-286 each bind carbamoyl phosphate.

This sequence belongs to the aspartate/ornithine carbamoyltransferase superfamily. OTCase family.

It is found in the cytoplasm. The enzyme catalyses carbamoyl phosphate + L-ornithine = L-citrulline + phosphate + H(+). It functions in the pathway amino-acid biosynthesis; L-arginine biosynthesis; L-arginine from L-ornithine and carbamoyl phosphate: step 1/3. Functionally, reversibly catalyzes the transfer of the carbamoyl group from carbamoyl phosphate (CP) to the N(epsilon) atom of ornithine (ORN) to produce L-citrulline. In Methanothermobacter thermautotrophicus (strain ATCC 29096 / DSM 1053 / JCM 10044 / NBRC 100330 / Delta H) (Methanobacterium thermoautotrophicum), this protein is Ornithine carbamoyltransferase (argF).